A 286-amino-acid chain; its full sequence is Aquaporin NIP1-3 (286 aa).

A disordered region spans residues 1-44 (MAGGEHGVNGQHEETRAMEEGSRDHQARCENSEQDGGSKSSSNN). Residues 11–31 (QHEETRAMEEGSRDHQARCEN) are compositionally biased toward basic and acidic residues. Polar residues predominate over residues 34–44 (QDGGSKSSSNN). A run of 2 helical transmembrane segments spans residues 56 to 76 (VIAEILGTFFLIFAGCAAVAV) and 84 to 104 (VTFPGICITWGLAVMVMVYSV). The NPA 1 signature appears at 113–115 (NPA). 3 helical membrane-spanning segments follow: residues 131–153 (VPAYAAAQVAGSAAASAALRALF), 172–192 (SLAMEFIITFYLMFVVSGVAT), and 200–220 (LAGLAVGATVLVNVLFAGPIS). The NPA 2 signature appears at 225-227 (NPA). Residues 239-259 (YTGIWVYIAGPVFGAVAGAWA) form a helical membrane-spanning segment.

It belongs to the MIP/aquaporin (TC 1.A.8) family. NIP (TC 1.A.8.12) subfamily.

It localises to the membrane. Its function is as follows. Aquaporins facilitate the transport of water and small neutral solutes across cell membranes. The protein is Aquaporin NIP1-3 (NIP1-3) of Oryza sativa subsp. japonica (Rice).